A 376-amino-acid polypeptide reads, in one-letter code: Cyclic GMP-AMP synthase-like receptor 1 (376 aa).

2 residues coordinate Mg(2+): E77 and D79.

This sequence belongs to the mab-21 family. It depends on Mg(2+) as a cofactor. Mn(2+) is required as a cofactor.

The enzyme catalyses UTP + ATP = 3',3'-cUAMP + 2 diphosphate. Functionally, nucleotidyltransferase that catalyzes the formation of cyclic UMP-AMP (3',3'-cUAMP) from ATP and UTP and plays a key role in innate immunity. Acts as a key sensor of double-stranded RNA (dsRNA), the presence of dsRNA in the cytoplasm being a danger signal that triggers the immune responses. Directly binds dsRNA, activating the nucleotidyltransferase activity, leading to synthesis of 3',3'-cUAMP, a second messenger that binds to and activates Sting, thereby triggering the immune response via activation of the NF-kappa-B transcription factor. This Stylophora pistillata (Smooth cauliflower coral) protein is Cyclic GMP-AMP synthase-like receptor 1.